The primary structure comprises 127 residues: Profilin (127 aa).

Belongs to the profilin family. In terms of assembly, occurs in many kinds of cells as a complex with monomeric actin in a 1:1 ratio.

Its subcellular location is the cytoplasm. The protein resides in the cytoskeleton. In terms of biological role, binds to actin and affects the structure of the cytoskeleton. At high concentrations, profilin prevents the polymerization of actin, whereas it enhances it at low concentrations. By binding to PIP2, it inhibits the formation of IP3 and DG. In S.pombe, it is essential for cytokinesis. The protein is Profilin (cdc3) of Schizosaccharomyces pombe (strain 972 / ATCC 24843) (Fission yeast).